The following is a 293-amino-acid chain: Sodium-type flagellar protein MotY (293 aa).

A signal peptide spans 1 to 21 (MNKWLITSGVMLSLLSANSYA). In terms of domain architecture, OmpA-like spans 175 to 292 (YSFEDIAFTI…RVVISLGRTQ (118 aa)).

It localises to the cell membrane. Functionally, may play the role of a stator in the sodium flagellar motor, stabilizing the force-generating unit through direct interaction with the cell wall. The chain is Sodium-type flagellar protein MotY from Vibrio parahaemolyticus serotype O3:K6 (strain RIMD 2210633).